Reading from the N-terminus, the 344-residue chain is Histone-lysine N-methyltransferase, H3 lysine-9 specific KMT1 (344 aa).

Residues 79–174 enclose the Pre-SET domain; sequence SGCSCAKDSE…DCPNRVVERG (96 aa). Positions 81, 83, 89, 94, 96, 156, 160, 162, 166, and 272 each coordinate Zn(2+). The SET domain maps to 177–312; it reads IPLEIFRTPD…EGEELTFDYV (136 aa). S-adenosyl-L-methionine is bound at residue tyrosine 311. The Post-SET domain occupies 328–344; it reads HMTRCLCGSKKCRKFLW. Zn(2+)-binding residues include cysteine 332, cysteine 334, and cysteine 339.

It belongs to the class V-like SAM-binding methyltransferase superfamily.

It is found in the chromosome. It carries out the reaction L-lysyl(9)-[histone H3] + 3 S-adenosyl-L-methionine = N(6),N(6),N(6)-trimethyl-L-lysyl(9)-[histone H3] + 3 S-adenosyl-L-homocysteine + 3 H(+). Its function is as follows. Histone methyltransferase that specifically trimethylates histone H3 to form H3K9me3. H3K9me3 marks chromatin regions for DNA methylation. Plays a key role in the regulation of the biosynthesis of the gamma-pyrones fusapyrone (FPY) and deoxyfusapyrone (dFPY). This is Histone-lysine N-methyltransferase, H3 lysine-9 specific KMT1 from Fusarium mangiferae (Mango malformation disease fungus).